A 632-amino-acid chain; its full sequence is Acyl-coenzyme A oxidase-like protein (632 aa).

Residue 376–381 coordinates FAD; the sequence is TGGMGY.

The protein belongs to the acyl-CoA oxidase family. The cofactor is FAD.

The chain is Acyl-coenzyme A oxidase-like protein (Acoxl) from Mus musculus (Mouse).